The following is a 148-amino-acid chain: MARALCRLPRRGLWLLLAHHLFMTTACQEANYGALLRELCLTQFQVDMEAVGETLWCDWGRTIRSYRELADCTWHMAEKLGCFWPNAEVDRFFLAVHGRYFRSCPISGRAVRDPPGSILYPFIVVPITVTLLVTALVVWQSKRTEGIV.

A signal peptide spans 1-26 (MARALCRLPRRGLWLLLAHHLFMTTA). Disulfide bonds link Cys27–Cys82, Cys40–Cys72, and Cys57–Cys104. At 27-118 (CQEANYGALL…RAVRDPPGSI (92 aa)) the chain is on the extracellular side. The chain crosses the membrane as a helical span at residues 119 to 140 (LYPFIVVPITVTLLVTALVVWQ). The Cytoplasmic portion of the chain corresponds to 141–148 (SKRTEGIV).

Belongs to the RAMP family. In terms of assembly, heterodimer of CALCRL and RAMP1; the interaction induces allosteric modulation of CALCRL function and CGRP1/CALCA and CGRP2/CALCB ligand specificity. Heterodimer of CALCR and RAMP1; interaction forms the AMYR1 receptor complex for amylin/IAPP and CGRP1/CALCA ligands. In terms of tissue distribution, expressed in many tissues including the uterus, bladder, brain, pancreas and gastro-intestinal tract.

It localises to the cell membrane. Accessory protein that interacts with and modulates the function of G-protein coupled receptors including calcitonin gene-related peptide type 1 receptor (CALCRL) and calcitonin receptor (CALCR). Required for the transport of CALCRL to the plasma membrane. Together with CALCRL, form the receptor complex for the calcitonin gene-related peptides CGRP1/CALCA and CGRP2/CALCB. Together with CALCR, form the AMYR1 receptor complex for amylin/IAPP and CGRP1/CALCA. In Homo sapiens (Human), this protein is Receptor activity-modifying protein 1.